The primary structure comprises 171 residues: Large ribosomal subunit protein uL10 (171 aa).

The protein belongs to the universal ribosomal protein uL10 family. As to quaternary structure, part of the ribosomal stalk of the 50S ribosomal subunit. The N-terminus interacts with L11 and the large rRNA to form the base of the stalk. The C-terminus forms an elongated spine to which L12 dimers bind in a sequential fashion forming a multimeric L10(L12)X complex.

Functionally, forms part of the ribosomal stalk, playing a central role in the interaction of the ribosome with GTP-bound translation factors. This chain is Large ribosomal subunit protein uL10, found in Methylocella silvestris (strain DSM 15510 / CIP 108128 / LMG 27833 / NCIMB 13906 / BL2).